Here is a 227-residue protein sequence, read N- to C-terminus: NAD(P)H-quinone oxidoreductase subunit K, chloroplastic (227 aa).

The [4Fe-4S] cluster site is built by cysteine 43, cysteine 44, cysteine 108, and cysteine 139. The span at 173–192 shows a compositional bias: polar residues; it reads RSFTTNHKFQVGRSSHTGNY. Residues 173 to 201 form a disordered region; the sequence is RSFTTNHKFQVGRSSHTGNYDQGFLSKPP.

Belongs to the complex I 20 kDa subunit family. In terms of assembly, NDH is composed of at least 16 different subunits, 5 of which are encoded in the nucleus. The cofactor is [4Fe-4S] cluster.

It is found in the plastid. Its subcellular location is the chloroplast thylakoid membrane. It carries out the reaction a plastoquinone + NADH + (n+1) H(+)(in) = a plastoquinol + NAD(+) + n H(+)(out). It catalyses the reaction a plastoquinone + NADPH + (n+1) H(+)(in) = a plastoquinol + NADP(+) + n H(+)(out). Its function is as follows. NDH shuttles electrons from NAD(P)H:plastoquinone, via FMN and iron-sulfur (Fe-S) centers, to quinones in the photosynthetic chain and possibly in a chloroplast respiratory chain. The immediate electron acceptor for the enzyme in this species is believed to be plastoquinone. Couples the redox reaction to proton translocation, and thus conserves the redox energy in a proton gradient. The sequence is that of NAD(P)H-quinone oxidoreductase subunit K, chloroplastic from Trachelium caeruleum (Blue throatwort).